A 339-amino-acid polypeptide reads, in one-letter code: Putative methylthioribose-1-phosphate isomerase (339 aa).

Residues 43-45 (RGA), Arg-86, and Gln-191 each bind substrate. Asp-232 serves as the catalytic Proton donor. 241–242 (NK) contacts substrate.

This sequence belongs to the eIF-2B alpha/beta/delta subunits family. MtnA subfamily.

It carries out the reaction 5-(methylsulfanyl)-alpha-D-ribose 1-phosphate = 5-(methylsulfanyl)-D-ribulose 1-phosphate. Its function is as follows. Catalyzes the interconversion of methylthioribose-1-phosphate (MTR-1-P) into methylthioribulose-1-phosphate (MTRu-1-P). This chain is Putative methylthioribose-1-phosphate isomerase, found in Archaeoglobus fulgidus (strain ATCC 49558 / DSM 4304 / JCM 9628 / NBRC 100126 / VC-16).